Reading from the N-terminus, the 254-residue chain is Putative biopolymer transport protein ExbB-like 1 (254 aa).

3 helical membrane passes run 39–59 (GGVV…TAFE), 141–161 (LETI…TGLI), and 185–205 (IGEA…ALLV).

It belongs to the ExbB/TolQ family.

The protein resides in the cell inner membrane. Its function is as follows. Involved in the TonB-dependent energy-dependent transport of various receptor-bound substrates. Protects ExbD from proteolytic degradation and functionally stabilizes TonB. This is Putative biopolymer transport protein ExbB-like 1 from Synechocystis sp. (strain ATCC 27184 / PCC 6803 / Kazusa).